Reading from the N-terminus, the 804-residue chain is Leucine--tRNA ligase (804 aa).

The short motif at 40–51 (PYPSGAGLHVGH) is the 'HIGH' region element. Positions 576-580 (KMSKS) match the 'KMSKS' region motif. Lys579 lines the ATP pocket.

Belongs to the class-I aminoacyl-tRNA synthetase family.

It is found in the cytoplasm. It carries out the reaction tRNA(Leu) + L-leucine + ATP = L-leucyl-tRNA(Leu) + AMP + diphosphate. The protein is Leucine--tRNA ligase of Staphylococcus epidermidis (strain ATCC 35984 / DSM 28319 / BCRC 17069 / CCUG 31568 / BM 3577 / RP62A).